Here is a 366-residue protein sequence, read N- to C-terminus: Protein-methionine-sulfoxide reductase catalytic subunit MsrP (366 aa).

A compositionally biased stretch (low complexity) spans 1 to 22; it reads MHNTFTHTKNNTHTKNNTQAKN. A disordered region spans residues 1–40; the sequence is MHNTFTHTKNNTHTKNNTQAKNSGSQTKSNAVSLNKPRKL. The segment at residues 1-76 is a signal peptide (tat-type signal); that stretch reads MHNTFTHTKN…TLALPASAQA (76 aa). Polar residues predominate over residues 23 to 33; sequence SGSQTKSNAVS. Residues Asn120, 123 to 124, Cys178, Thr213, Asn265, Arg270, and 281 to 283 each bind Mo-molybdopterin; these read YE and SIK.

Belongs to the MsrP family. In terms of assembly, heterodimer of a catalytic subunit (MsrP) and a heme-binding subunit (MsrQ). Requires Mo-molybdopterin as cofactor. In terms of processing, predicted to be exported by the Tat system. The position of the signal peptide cleavage has not been experimentally proven.

Its subcellular location is the periplasm. The enzyme catalyses L-methionyl-[protein] + a quinone + H2O = L-methionyl-(S)-S-oxide-[protein] + a quinol. It carries out the reaction L-methionyl-[protein] + a quinone + H2O = L-methionyl-(R)-S-oxide-[protein] + a quinol. Its function is as follows. Part of the MsrPQ system that repairs oxidized periplasmic proteins containing methionine sulfoxide residues (Met-O), using respiratory chain electrons. Thus protects these proteins from oxidative-stress damage caused by reactive species of oxygen and chlorine generated by the host defense mechanisms. MsrPQ is essential for the maintenance of envelope integrity under bleach stress, rescuing a wide series of structurally unrelated periplasmic proteins from methionine oxidation. The catalytic subunit MsrP is non-stereospecific, being able to reduce both (R-) and (S-) diastereoisomers of methionine sulfoxide. The chain is Protein-methionine-sulfoxide reductase catalytic subunit MsrP from Yersinia pestis.